The following is a 539-amino-acid chain: Dopamine receptor 2 (539 aa).

Residues methionine 1–alanine 113 lie on the Extracellular side of the membrane. Residues asparagine 5, asparagine 31, asparagine 47, and asparagine 68 are each glycosylated (N-linked (GlcNAc...) asparagine). The helical transmembrane segment at phenylalanine 114–isoleucine 134 threads the bilayer. The Cytoplasmic segment spans residues arginine 135–tyrosine 145. Residues phenylalanine 146–alanine 166 traverse the membrane as a helical segment. Topologically, residues leucine 167–aspartate 189 are extracellular. Cysteine 182 and cysteine 261 are disulfide-bonded. The helical transmembrane segment at valine 190 to aspartate 206 threads the bilayer. The Cytoplasmic portion of the chain corresponds to arginine 207 to alanine 227. The chain crosses the membrane as a helical span at residues glycine 228–tryptophan 248. The Extracellular segment spans residues arginine 249–histidine 266. Residues leucine 267–phenylalanine 287 form a helical membrane-spanning segment. Residues threonine 288–threonine 420 are Cytoplasmic-facing. Residues glycine 326–leucine 387 are disordered. Residues serine 337–serine 352 are compositionally biased toward gly residues. The span at serine 356–histidine 367 shows a compositional bias: basic residues. The helical transmembrane segment at leucine 421–leucine 441 threads the bilayer. Over serine 442–glutamate 453 the chain is Extracellular. A helical transmembrane segment spans residues isoleucine 454 to tyrosine 474. Over alanine 475–isoleucine 539 the chain is Cytoplasmic. S-palmitoyl cysteine attachment occurs at residues cysteine 492 and cysteine 493.

This sequence belongs to the G-protein coupled receptor 1 family. As to expression, expressed in both central and peripheral nervous systems.

The protein localises to the cell membrane. Receptor for dopamine. The activity of this receptor is mediated by G proteins which activate adenylyl cyclase. Also capable of generating a calcium signal. In terms of antagonist responses, would be classed with the D1-like dopamine receptor group. This receptor is an attractive candidate for initiating biochemical cascades underlying olfactory learning. This is Dopamine receptor 2 (Dop1R2) from Drosophila melanogaster (Fruit fly).